The primary structure comprises 475 residues: Bystin (475 aa).

2 stretches are compositionally biased toward basic residues: residues 1 to 12 (MGKDVKKVHKLR) and 29 to 41 (KPHK…RKKK). Disordered regions lie at residues 1-57 (MGKD…ESVI) and 106-149 (DFID…QFGV). Composition is skewed to acidic residues over residues 45–54 (ENDTGIDETE) and 107–119 (FIDD…DADQ).

It belongs to the bystin family.

It is found in the nucleus. The protein localises to the nucleolus. Functionally, required for processing of 20S pre-rRNA precursor and biogenesis of 40S ribosomal subunits. This Dictyostelium discoideum (Social amoeba) protein is Bystin (bysl).